The following is a 137-amino-acid chain: Small ribosomal subunit protein uS9 (137 aa).

This sequence belongs to the universal ribosomal protein uS9 family.

The protein is Small ribosomal subunit protein uS9 (rps9) of Saccharolobus solfataricus (strain ATCC 35092 / DSM 1617 / JCM 11322 / P2) (Sulfolobus solfataricus).